A 550-amino-acid chain; its full sequence is MRAEQYLKTCLECTIKKLGYTWPKKAVIEIPQNTLHGDLATNIALVLANNIGINPKNIAEKIAEKLQQESTSFSSVSVAGPGFLNITFSPTFWQKTINHILSKGSSYGSCQLGNKQKVLIEYVSANPTGPLHIGHGRGAAIGDTLARLLRFTGYNVTTEYYINDAGRQMQLLGLSIWLRIKELSGIQVTWPEEYYKGTYIIEIAKALLEEQPDIISYTDIDGEQASFHFGMNVILNGIKQDLKTFKVEHEEWFSERTLIKTNAIEQTLKALECTGLTFEKEGALWFQSTVFGDDKDRVLRKSDKSLTYFALDIAYHYTKYNRGFDRIIDILGADHHGYIARIKAAMQAFGHDPMTFDIILIQLVSLLENGIQVAMSTRAGQFEKLIDVINEVGVDAARFMFLLRKSDAHLDFDLELVKQRTMNNPVYYVQYAYARICSIIRKAHDLGFTITDVNEVPLSNITTKDELNLLRLLDKFEDVIYNAAQHLAPHYITHYLMELAGELHSYYAKYPVLQSNEKTIVLSRLALLQAVGQVIYNALNILGVTAPKNM.

The 'HIGH' region signature appears at 125 to 135 (ANPTGPLHIGH).

It belongs to the class-I aminoacyl-tRNA synthetase family. In terms of assembly, monomer.

Its subcellular location is the cytoplasm. The catalysed reaction is tRNA(Arg) + L-arginine + ATP = L-arginyl-tRNA(Arg) + AMP + diphosphate. This chain is Arginine--tRNA ligase, found in Lawsonia intracellularis (strain PHE/MN1-00).